Consider the following 309-residue polypeptide: ATP synthase gamma chain (309 aa).

Belongs to the ATPase gamma chain family. In terms of assembly, F-type ATPases have 2 components, CF(1) - the catalytic core - and CF(0) - the membrane proton channel. CF(1) has five subunits: alpha(3), beta(3), gamma(1), delta(1), epsilon(1). CF(0) has three main subunits: a, b and c.

The protein localises to the cell membrane. Produces ATP from ADP in the presence of a proton gradient across the membrane. The gamma chain is believed to be important in regulating ATPase activity and the flow of protons through the CF(0) complex. The polypeptide is ATP synthase gamma chain (Mycobacterium sp. (strain JLS)).